The sequence spans 39 residues: Conotoxin Cl14.5 (39 aa).

Positions 1–16 are excised as a propeptide; that stretch reads PVNEAGVERLFRALVG. Pro38 carries the proline amide modification.

Post-translationally, contains 2 disulfide bonds. As to expression, expressed by the venom duct.

It localises to the secreted. This is Conotoxin Cl14.5 from Californiconus californicus (California cone).